The primary structure comprises 618 residues: Indolepyruvate oxidoreductase subunit IorA (618 aa).

4Fe-4S ferredoxin-type domains are found at residues 558–587 (GRPM…VTRE) and 588–617 (GEVF…PEGK). Residues C568, C571, C574, C580, C597, C600, C603, and C607 each contribute to the [4Fe-4S] cluster site.

In terms of assembly, heterodimer of the IorA and IorB subunits. Requires [4Fe-4S] cluster as cofactor.

It carries out the reaction indole-3-pyruvate + 2 oxidized [2Fe-2S]-[ferredoxin] + CoA = (indol-3-yl)acetyl-CoA + 2 reduced [2Fe-2S]-[ferredoxin] + CO2 + H(+). Catalyzes the ferredoxin-dependent oxidative decarboxylation of arylpyruvates. This Methanothermobacter thermautotrophicus (strain ATCC 29096 / DSM 1053 / JCM 10044 / NBRC 100330 / Delta H) (Methanobacterium thermoautotrophicum) protein is Indolepyruvate oxidoreductase subunit IorA (iorA).